Consider the following 526-residue polypeptide: Peptide chain release factor 3 (526 aa).

Positions 9–277 constitute a tr-type G domain; that stretch reads DRRRTFAIVS…TFVDHAPAPL (269 aa). GTP contacts are provided by residues 18–25, 86–90, and 140–143; these read SHPDAGKT, DTPGH, and NKLD.

The protein belongs to the TRAFAC class translation factor GTPase superfamily. Classic translation factor GTPase family. PrfC subfamily.

Its subcellular location is the cytoplasm. Its function is as follows. Increases the formation of ribosomal termination complexes and stimulates activities of RF-1 and RF-2. It binds guanine nucleotides and has strong preference for UGA stop codons. It may interact directly with the ribosome. The stimulation of RF-1 and RF-2 is significantly reduced by GTP and GDP, but not by GMP. In Geobacter sulfurreducens (strain ATCC 51573 / DSM 12127 / PCA), this protein is Peptide chain release factor 3.